We begin with the raw amino-acid sequence, 602 residues long: Elongation factor 4 (602 aa).

Residues 8 to 189 (KNIRNFSIIA…KIITTIPAPS (182 aa)) enclose the tr-type G domain. GTP is bound by residues 20–25 (DHGKST) and 136–139 (NKID).

It belongs to the TRAFAC class translation factor GTPase superfamily. Classic translation factor GTPase family. LepA subfamily.

The protein resides in the cell inner membrane. The enzyme catalyses GTP + H2O = GDP + phosphate + H(+). Its function is as follows. Required for accurate and efficient protein synthesis under certain stress conditions. May act as a fidelity factor of the translation reaction, by catalyzing a one-codon backward translocation of tRNAs on improperly translocated ribosomes. Back-translocation proceeds from a post-translocation (POST) complex to a pre-translocation (PRE) complex, thus giving elongation factor G a second chance to translocate the tRNAs correctly. Binds to ribosomes in a GTP-dependent manner. The sequence is that of Elongation factor 4 from Helicobacter pylori (strain Shi470).